Here is a 199-residue protein sequence, read N- to C-terminus: 5'-deoxynucleotidase YfbR (199 aa).

Residues 18–19 and histidine 33 each bind substrate; that span reads RW. Residues 30 to 142 enclose the HD domain; it reads VSEHSLQVAM…VKQADALCAY (113 aa). 3 residues coordinate a divalent metal cation: histidine 33, histidine 68, and aspartate 69. Substrate-binding positions include aspartate 69, 77 to 80, and aspartate 137; that span reads DLPT. Aspartate 137 contacts a divalent metal cation.

The protein belongs to the 5DNU family. As to quaternary structure, homodimer. The cofactor is a divalent metal cation.

It is found in the cytoplasm. The catalysed reaction is a 2'-deoxyribonucleoside 5'-phosphate + H2O = a 2'-deoxyribonucleoside + phosphate. In terms of biological role, catalyzes the strictly specific dephosphorylation of 2'-deoxyribonucleoside 5'-monophosphates. This is 5'-deoxynucleotidase YfbR from Escherichia coli (strain 55989 / EAEC).